The primary structure comprises 77 residues: Acyl carrier protein (77 aa).

The Carrier domain maps to 2–77 (SDIADRVKKI…DAVKFISEAA (76 aa)). An O-(pantetheine 4'-phosphoryl)serine modification is found at serine 37.

Belongs to the acyl carrier protein (ACP) family. 4'-phosphopantetheine is transferred from CoA to a specific serine of apo-ACP by AcpS. This modification is essential for activity because fatty acids are bound in thioester linkage to the sulfhydryl of the prosthetic group.

Its subcellular location is the cytoplasm. Its pathway is lipid metabolism; fatty acid biosynthesis. In terms of biological role, carrier of the growing fatty acid chain in fatty acid biosynthesis. The chain is Acyl carrier protein from Cereibacter sphaeroides (strain ATCC 17029 / ATH 2.4.9) (Rhodobacter sphaeroides).